We begin with the raw amino-acid sequence, 430 residues long: uncharacterized protein (430 aa).

A helical membrane pass occupies residues 207–223; the sequence is GETYMFGSANGLQLSIY.

The protein localises to the host membrane. Its function is as follows. May play a role in phage assembly. This is an uncharacterized protein from Pseudomonas phage Pf1 (Bacteriophage Pf1).